We begin with the raw amino-acid sequence, 347 residues long: Probable arabinogalactan endo-beta-1,4-galactanase A (347 aa).

The signal sequence occupies residues 1–16 (MLFSYLLATLPLLANA). Glu-150 (proton donor) is an active-site residue. Glu-260 (nucleophile) is an active-site residue.

This sequence belongs to the glycosyl hydrolase 53 family.

Its subcellular location is the secreted. It catalyses the reaction The enzyme specifically hydrolyzes (1-&gt;4)-beta-D-galactosidic linkages in type I arabinogalactans.. In terms of biological role, endogalactanase involved in the degradation of plant cell wall polysaccharides, and more particularly of hairy regions of pectin. This Aspergillus flavus (strain ATCC 200026 / FGSC A1120 / IAM 13836 / NRRL 3357 / JCM 12722 / SRRC 167) protein is Probable arabinogalactan endo-beta-1,4-galactanase A (galA).